The sequence spans 374 residues: MNTNLLDFDLDGLAAYCEQLGEKRFRATQLFRWIHQRGASDFDQMSDLAKSLREKLKACAHITALPVLTEHVSADGTVKWLFDVGGGDAVEAVFIPEDDRGTLCVSSQAGCAVGCRFCSTGHQGFSRNLSTGEILAQLWYAEHSLRKRLGTGGERVISNVVMMGMGEPLQNYTALVPALRAMLDDHGYGLSRRRVTVSTSGVVPMIDRLSQDCAVAMAVSLHAPNDELRDPLVPLNRKYPIHELLDACERYLEFAPRDFITFEYCMLDGVNDQPEHARQLIELVRARGDGRSWCKFNLIPFNPFPASGLLRSPAARVTEFASLLSNAGIVTTVRKTRGDDIDAACGQLAGDVKDRTRAAERMARQRTIVLKQVP.

E91 (proton acceptor) is an active-site residue. In terms of domain architecture, Radical SAM core spans 97-340 (EDDRGTLCVS…TTVRKTRGDD (244 aa)). The cysteines at positions 104 and 345 are disulfide-linked. C111, C115, and C118 together coordinate [4Fe-4S] cluster. Residues 166–167 (GE), S198, 220–222 (SLH), and N302 each bind S-adenosyl-L-methionine. C345 functions as the S-methylcysteine intermediate in the catalytic mechanism.

This sequence belongs to the radical SAM superfamily. RlmN family. The cofactor is [4Fe-4S] cluster.

It localises to the cytoplasm. It catalyses the reaction adenosine(2503) in 23S rRNA + 2 reduced [2Fe-2S]-[ferredoxin] + 2 S-adenosyl-L-methionine = 2-methyladenosine(2503) in 23S rRNA + 5'-deoxyadenosine + L-methionine + 2 oxidized [2Fe-2S]-[ferredoxin] + S-adenosyl-L-homocysteine. The enzyme catalyses adenosine(37) in tRNA + 2 reduced [2Fe-2S]-[ferredoxin] + 2 S-adenosyl-L-methionine = 2-methyladenosine(37) in tRNA + 5'-deoxyadenosine + L-methionine + 2 oxidized [2Fe-2S]-[ferredoxin] + S-adenosyl-L-homocysteine. In terms of biological role, specifically methylates position 2 of adenine 2503 in 23S rRNA and position 2 of adenine 37 in tRNAs. m2A2503 modification seems to play a crucial role in the proofreading step occurring at the peptidyl transferase center and thus would serve to optimize ribosomal fidelity. This chain is Dual-specificity RNA methyltransferase RlmN, found in Delftia acidovorans (strain DSM 14801 / SPH-1).